The sequence spans 445 residues: MKPVIALVGRPNVGKSTLFNRLTRSRDALVADLPGLTRDRHYGEGRVGERPYLVVDTGGFEPVAKDGILHEMARQTRQAVEEADVVVFIVDGRNGLAPQDKSIADYLRKTGRPIFLVVNKAEGMKYTAVATDFYELGLGDPRAISAAHGDGVTDMINEALEVAYAGQPEEADEDDPSRGIKIAIVGRPNVGKSTLVNALIGEDRVIAFDMPGTTRDSIYVDFERNGKKYTLIDTAGLRRRGKVFEAIEKFSVVKTLQSISDANVVILLLDAQQDISDQDAHIAGFVVEQGRALVIGVNKWDGLDEHARDRAKADLTRKLKFLDFAKSHYISAAKKTGIGALMRSVDDAYAAAMAKLPTPKLTRALIEAVEFQQPRRRGPVRPKLRYAHQGGQNPPLIVIHGNALDAVTETYKRYLENRFRETFSLTGTPLRIEFRSSNNPYADKS.

EngA-type G domains are found at residues 3–167 and 180–353; these read PVIA…YAGQ and IKIA…AAAM. Residues 9–16, 56–60, 119–122, 186–193, 233–237, and 298–301 each bind GTP; these read GRPNVGKS, DTGGF, NKAE, DTAGL, and NKWD. Positions 354 to 438 constitute a KH-like domain; the sequence is AKLPTPKLTR…PLRIEFRSSN (85 aa).

It belongs to the TRAFAC class TrmE-Era-EngA-EngB-Septin-like GTPase superfamily. EngA (Der) GTPase family. As to quaternary structure, associates with the 50S ribosomal subunit.

Functionally, GTPase that plays an essential role in the late steps of ribosome biogenesis. This chain is GTPase Der, found in Burkholderia lata (strain ATCC 17760 / DSM 23089 / LMG 22485 / NCIMB 9086 / R18194 / 383).